The chain runs to 146 residues: Hemoglobin subunit beta (146 aa).

Val-1 is modified (N-acetylvaline). In terms of domain architecture, Globin spans 2-146; sequence HLTPEEKSAV…VANALAHKYH (145 aa). Phosphothreonine is present on Thr-12. The residue at position 44 (Ser-44) is a Phosphoserine. Lys-59 is modified (N6-acetyllysine). Heme b is bound at residue His-63. Lys-82 is modified (N6-acetyllysine). Residue His-92 coordinates heme b. S-nitrosocysteine is present on Cys-93. The residue at position 144 (Lys-144) is an N6-acetyllysine.

This sequence belongs to the globin family. Heterotetramer of two alpha chains and two beta chains. As to expression, red blood cells.

Its function is as follows. Involved in oxygen transport from the lung to the various peripheral tissues. The protein is Hemoglobin subunit beta (HBB) of Hylobates lar (Lar gibbon).